The sequence spans 279 residues: Proteasome subunit alpha type-1 (279 aa).

A Phosphotyrosine modification is found at Tyr-103. The segment covering 235–249 has biased composition (basic and acidic residues); sequence HVAIAKENDNDTPRN. The disordered stretch occupies residues 235–279; the sequence is HVAIAKENDNDTPRNDDDDDRPSPPEEPAAGPRDPEVLVATEQRP.

This sequence belongs to the peptidase T1A family. As to quaternary structure, the 26S proteasome consists of a 20S proteasome core and two 19S regulatory subunits. The 20S proteasome core is composed of 28 subunits that are arranged in four stacked rings, resulting in a barrel-shaped structure. The two end rings are each formed by seven alpha subunits, and the two central rings are each formed by seven beta subunits. The catalytic chamber with the active sites is on the inside of the barrel. Interacts with PI31.

It is found in the cytoplasm. The protein localises to the nucleus. Functionally, the proteasome is a multicatalytic proteinase complex which is characterized by its ability to cleave peptides with Arg, Phe, Tyr, Leu, and Glu adjacent to the leaving group at neutral or slightly basic pH. The proteasome has an ATP-dependent proteolytic activity. In Drosophila melanogaster (Fruit fly), this protein is Proteasome subunit alpha type-1 (Prosalpha6).